The sequence spans 215 residues: Large ribosomal subunit protein uL1 (215 aa).

The protein belongs to the universal ribosomal protein uL1 family. Part of the 50S ribosomal subunit.

In terms of biological role, binds directly to 23S rRNA. Probably involved in E site tRNA release. Its function is as follows. Protein L1 is also a translational repressor protein, it controls the translation of its operon by binding to its mRNA. The chain is Large ribosomal subunit protein uL1 from Cenarchaeum symbiosum (strain A).